The primary structure comprises 666 residues: Endogenous retrovirus group K member 10 Gag polyprotein (666 aa).

Gly-2 is lipidated: N-myristoyl glycine. The disordered stretch occupies residues 164–183 (EGKGPELMGPSESKPRGTSP). 2 consecutive CCHC-type zinc fingers follow at residues 544–561 (GKCYNCGQIGHLKKNCPV) and 580–597 (DLCPRCKKGKHWASQCRS). The interval 598–642 (KFDKNGQPLSGNEQRGQPQAPQQTGAFPIQPFVPQGFQGQQPPLS) is disordered. Polar residues predominate over residues 604–622 (QPLSGNEQRGQPQAPQQTG). The span at 624 to 640 (FPIQPFVPQGFQGQQPP) shows a compositional bias: low complexity.

Belongs to the beta type-B retroviral Gag protein family. HERV class-II K(HML-2) gag subfamily. Post-translationally, myristoylation is essential for retroviral assembly. Alteration of the glycine residue leads to a block in the budding of particles and an accumulation of Gag inside the cell. In terms of processing, specific enzymatic cleavages may yield mature proteins.

The protein localises to the cell membrane. Functionally, the products of the Gag polyproteins of infectious retroviruses perform highly complex orchestrated tasks during the assembly, budding, maturation, and infection stages of the viral replication cycle. During viral assembly, the proteins form membrane associations and self-associations that ultimately result in budding of an immature virion from the infected cell. Gag precursors also function during viral assembly to selectively bind and package two plus strands of genomic RNA. Endogenous Gag proteins may have kept, lost or modified their original function during evolution. The sequence is that of Endogenous retrovirus group K member 10 Gag polyprotein (ERVK-10) from Homo sapiens (Human).